Consider the following 682-residue polypeptide: DNA-directed RNA polymerase subunit beta' (682 aa).

Zn(2+) is bound by residues cysteine 69, cysteine 71, cysteine 87, and cysteine 90. Residues aspartate 489, aspartate 491, and aspartate 493 each contribute to the Mg(2+) site.

Belongs to the RNA polymerase beta' chain family. RpoC1 subfamily. In terms of assembly, in plastids the minimal PEP RNA polymerase catalytic core is composed of four subunits: alpha, beta, beta', and beta''. When a (nuclear-encoded) sigma factor is associated with the core the holoenzyme is formed, which can initiate transcription. The cofactor is Mg(2+). Requires Zn(2+) as cofactor.

The protein localises to the plastid. Its subcellular location is the chloroplast. It carries out the reaction RNA(n) + a ribonucleoside 5'-triphosphate = RNA(n+1) + diphosphate. In terms of biological role, DNA-dependent RNA polymerase catalyzes the transcription of DNA into RNA using the four ribonucleoside triphosphates as substrates. The protein is DNA-directed RNA polymerase subunit beta' of Acorus gramineus (Dwarf sweet flag).